A 141-amino-acid chain; its full sequence is Hemoglobin subunit alpha (141 aa).

A Globin domain is found at 1–141 (VLSSADKNNI…VSTVLTSKYR (141 aa)). A Phosphoserine modification is found at S3. Residues K7 and K11 each carry the N6-succinyllysine modification. At K16 the chain carries N6-acetyllysine; alternate. The residue at position 16 (K16) is an N6-succinyllysine; alternate. Y24 carries the post-translational modification Phosphotyrosine. At S35 the chain carries Phosphoserine. K40 is subject to N6-succinyllysine. The residue at position 49 (S49) is a Phosphoserine. Residue H58 participates in O2 binding. H87 serves as a coordination point for heme b. S102 bears the Phosphoserine mark. 3 positions are modified to phosphothreonine: T108, T134, and T137. Phosphoserine is present on S138.

This sequence belongs to the globin family. As to quaternary structure, heterotetramer of two alpha chains and two beta chains. In terms of tissue distribution, red blood cells.

In terms of biological role, involved in oxygen transport from the lung to the various peripheral tissues. Functionally, hemopressin acts as an antagonist peptide of the cannabinoid receptor CNR1. Hemopressin-binding efficiently blocks cannabinoid receptor CNR1 and subsequent signaling. In Paguma larvata (Masked palm civet), this protein is Hemoglobin subunit alpha (HBA).